The primary structure comprises 89 residues: MALTAEQKKEILGTYGLHDTDTGSPEAQVALLTKRIADLTEHLKVHKHDHHSRRGLLLLVGRRRRLLKYVAQIDVERYRSLVERLGLRR.

It belongs to the universal ribosomal protein uS15 family. Part of the 30S ribosomal subunit. Forms a bridge to the 50S subunit in the 70S ribosome, contacting the 23S rRNA.

One of the primary rRNA binding proteins, it binds directly to 16S rRNA where it helps nucleate assembly of the platform of the 30S subunit by binding and bridging several RNA helices of the 16S rRNA. Its function is as follows. Forms an intersubunit bridge (bridge B4) with the 23S rRNA of the 50S subunit in the ribosome. The sequence is that of Small ribosomal subunit protein uS15 from Mycobacterium avium (strain 104).